The chain runs to 276 residues: NADPH-dependent 7-cyano-7-deazaguanine reductase (276 aa).

83-85 lines the substrate pocket; that stretch reads VES. 85–86 lines the NADPH pocket; that stretch reads SK. The active-site Thioimide intermediate is Cys184. Residue Asp191 is the Proton donor of the active site. 223–224 is a binding site for substrate; it reads HE. 252–253 lines the NADPH pocket; the sequence is RG.

The protein belongs to the GTP cyclohydrolase I family. QueF type 2 subfamily. In terms of assembly, homodimer.

It is found in the cytoplasm. It carries out the reaction 7-aminomethyl-7-carbaguanine + 2 NADP(+) = 7-cyano-7-deazaguanine + 2 NADPH + 3 H(+). It participates in tRNA modification; tRNA-queuosine biosynthesis. Its function is as follows. Catalyzes the NADPH-dependent reduction of 7-cyano-7-deazaguanine (preQ0) to 7-aminomethyl-7-deazaguanine (preQ1). In Azotobacter vinelandii (strain DJ / ATCC BAA-1303), this protein is NADPH-dependent 7-cyano-7-deazaguanine reductase.